The sequence spans 777 residues: Ribosome biogenesis protein ERB1 (777 aa).

The segment at 1–122 (MAPTAPAKKR…RPNYRVVEDA (122 aa)) is disordered. A compositionally biased stretch (acidic residues) spans 36–67 (SEDDSDFVASGDEDEEDEDEDEDEDKDEDDEH). WD repeat units lie at residues 430 to 469 (GHEG…QVWA), 473 to 513 (SSDE…PEVE), 562 to 604 (TVRS…SQIP), 606 to 645 (RKLS…LVKV), 648 to 687 (PGAR…RPYK), 691 to 731 (FHPQ…DLME), and 747 to 777 (VDSL…RLWM).

This sequence belongs to the WD repeat BOP1/ERB1 family. Component of the NOP7 complex, composed of ERB1, NOP7 and YTM1. The complex is held together by ERB1, which interacts with NOP7 via its N-terminal domain and with YTM1 via a high-affinity interaction between the seven-bladed beta-propeller domains of the 2 proteins. The NOP7 complex associates with the 66S pre-ribosome.

Its subcellular location is the nucleus. It localises to the nucleolus. The protein localises to the nucleoplasm. Component of the NOP7 complex, which is required for maturation of the 25S and 5.8S ribosomal RNAs and formation of the 60S ribosome. The protein is Ribosome biogenesis protein ERB1 of Pyricularia oryzae (strain 70-15 / ATCC MYA-4617 / FGSC 8958) (Rice blast fungus).